Here is a 392-residue protein sequence, read N- to C-terminus: General receptor for phosphoinositides 1-associated scaffold protein (392 aa).

Residues 1-50 (MTLRRLRKLQQKEEATAAPDPAGRAPDSEAARAAPLPSGPPAAAAPPGAP) form a disordered region. Pro residues predominate over residues 37-49 (PSGPPAAAAPPGA). Thr-76 bears the Phosphothreonine mark. Position 93 is a phosphoserine (Ser-93). The PDZ domain occupies 100 to 189 (VLTLEKGDNQ…VLRLETLYGT (90 aa)). Residues 180–257 (VLRLETLYGT…GAGLLPGSLP (78 aa)) are interaction with PSCD3. Tyr-236 carries the phosphotyrosine modification. Arg-269 carries the post-translational modification Omega-N-methylarginine. Positions 294-315 (PQALPPPPPPARALGPSSAETP) are disordered. Residue Ser-384 is modified to Phosphoserine.

In terms of assembly, heteromer. Composed of TAMALIN, CYTH2 and at least one GRM1. Also interacts with GRM2, GRM3 and GRM5. Interacts with CYTH3. In terms of tissue distribution, highly expressed in brain, heart and lung, and to a lower extent in embryo, kidney and ovary.

The protein resides in the cytoplasm. It localises to the perinuclear region. It is found in the cell membrane. The protein localises to the postsynaptic cell membrane. Functionally, plays a role in intracellular trafficking and contributes to the macromolecular organization of group 1 metabotropic glutamate receptors (mGluRs) at synapses. In Mus musculus (Mouse), this protein is General receptor for phosphoinositides 1-associated scaffold protein.